A 264-amino-acid polypeptide reads, in one-letter code: Polyneuridine aldehyde esterase (264 aa).

Positions 1 to 6 (MHSAAN) are excised as a propeptide. Residues 12–122 (HFVLVHGGCL…MMPDPNHSLT (111 aa)) form the AB hydrolase-1 domain. Active-site residues include Ser-87, Asp-216, and His-244. A 16-epivellosimine-binding site is contributed by Ser-87.

The protein belongs to the AB hydrolase superfamily. Homodimer; homodimerizes in aqueous solutions at pH 7.0. As to expression, mainly expressed in roots and, to a lower level, in leaves.

It carries out the reaction polyneuridine aldehyde + H2O = 16-epivellosimine + methanol + CO2. The protein operates within alkaloid biosynthesis; ajmaline biosynthesis. Inhibited by DEPC and HgCl(2). Functionally, hydrolase involved in the biosynthesis of ajmaline-type monoterpenoid indole alkaloids (MIAs) natural products, important plant-derived pharmaceuticals used in the therapy of heart disorders. Catalyzes the hydrolysis of polyneuridine aldehyde into epi-vellosimine, precursor of vomilenine, an intermediate chemical in the biosynthesis of ajmaline. In Rauvolfia serpentina (Serpentine wood), this protein is Polyneuridine aldehyde esterase.